The following is a 343-amino-acid chain: 3-hydroxy-3-methylglutaryl-CoA lyase, cytoplasmic (343 aa).

G2 carries N-myristoyl glycine lipidation. The Pyruvate carboxyltransferase domain maps to 48–315 (VKIVEVGPRD…NTGVDLHKVM (268 aa)). Substrate is bound at residue R56. The a divalent metal cation site is built by D57, H248, and H250. Residue C281 is part of the active site. N290 is an a divalent metal cation binding site.

The protein belongs to the HMG-CoA lyase family. It depends on a divalent metal cation as a cofactor. In terms of tissue distribution, present at high level in duodenum and small intestine (at protein level).

It is found in the cytoplasm. The protein resides in the cytosol. Its subcellular location is the endoplasmic reticulum membrane. It carries out the reaction (3S)-3-hydroxy-3-methylglutaryl-CoA = acetoacetate + acetyl-CoA. It functions in the pathway metabolic intermediate metabolism; (S)-3-hydroxy-3-methylglutaryl-CoA degradation; acetoacetate from (S)-3-hydroxy-3-methylglutaryl-CoA: step 1/1. Non-mitochondrial 3-hydroxy-3-methylglutaryl-CoA lyase that catalyzes a cation-dependent cleavage of (S)-3-hydroxy-3-methylglutaryl-CoA into acetyl-CoA and acetoacetate, a key step in ketogenesis, the products of which support energy production in nonhepatic animal tissues. The polypeptide is 3-hydroxy-3-methylglutaryl-CoA lyase, cytoplasmic (Hmgcll1) (Rattus norvegicus (Rat)).